A 527-amino-acid chain; its full sequence is Neutrophil cytosol factor 2 (527 aa).

3 TPR repeats span residues 37-70 (SRIC…DKHL), 71-104 (AVSY…LRGN), and 121-154 (CEVL…KSEP). Thr233 carries the post-translational modification Phosphothreonine. The SH3 1 domain occupies 240 to 299 (LEGEAHRVLFGFVPETPEELQVMPGNIVFVLKKGNDNWATVMFNGQKGLVPCNYLEPVEL). The disordered stretch occupies residues 304-345 (QQQPQEETSLESDIPAPPSSSAPGRPQLSPGQKGKEEPKQEI). Ser324 is modified (phosphoserine). Over residues 336–345 (KGKEEPKQEI) the composition is skewed to basic and acidic residues. Positions 352–430 (SYTLKVHYKY…YCLTLWCENT (79 aa)) constitute a PB1 domain. Phosphoserine is present on Ser400. A disordered region spans residues 434-457 (QGFPDEPEESKKSDANNQTTEPEL). Residues 458–517 (KEGSKVVALFSYEATQPEDLEFLEGDVILVISTVNEQWLEGECKGKVGIFPKAFVEQHPT) form the SH3 2 domain.

It belongs to the NCF2/NOXA1 family. Component of the phagocyte NADPH oxidase complex composed of an obligatory core heterodimer formed by the membrane proteins CYBA and CYBB and the cytosolic regulatory subunits NCF1/p47-phox, NCF2/p67-phox, NCF4/p40-phox and the small GTPase RAC1 or RAC2. Part of a cytosolic complex composed at least by NCF1, NCF2 and NCF4. Interacts with NCF4. Interacts (via the C-terminal SH3 domain) with NCF1 (via C-terminus). Interacts with SYTL1 and RAC1. May interact with NOXO1. Interacts with S100A8 and calprotectin (S100A8/9). Interacts with GBP7 (via GB1/RHD3-type G domain). Interacts with CYBB; the interaction is enhanced in the presence of GBP7.

It is found in the cytoplasm. In terms of biological role, subunit of the phagocyte NADPH oxidase complex that mediates the transfer of electrons from cytosolic NADPH to O2 to produce the superoxide anion (O2(-)). In the activated complex, electrons are first transferred from NADPH to flavin adenine dinucleotide (FAD) and subsequently transferred via two heme molecules to molecular oxygen, producing superoxide through an outer-sphere reaction. Activation of the NADPH oxidase complex is initiated by the assembly of cytosolic subunits of the NADPH oxidase complex with the core NADPH oxidase complex to form a complex at the plasma membrane or phagosomal membrane. This activation process is initiated by phosphorylation dependent binding of the cytosolic NCF1/p47-phox subunit to the C-terminus of CYBA/p22-phox. The chain is Neutrophil cytosol factor 2 from Bos taurus (Bovine).